Consider the following 59-residue polypeptide: Large ribosomal subunit protein bL32 (59 aa).

The disordered stretch occupies residues 1–22; sequence MAVQQNKKSPSKRGMHRSHDFL.

It belongs to the bacterial ribosomal protein bL32 family.

This chain is Large ribosomal subunit protein bL32, found in Thiobacillus denitrificans (strain ATCC 25259 / T1).